A 105-amino-acid chain; its full sequence is Integration host factor subunit beta (105 aa).

This sequence belongs to the bacterial histone-like protein family. In terms of assembly, heterodimer of an alpha and a beta chain.

This protein is one of the two subunits of integration host factor, a specific DNA-binding protein that functions in genetic recombination as well as in transcriptional and translational control. This chain is Integration host factor subunit beta, found in Nitrosomonas eutropha (strain DSM 101675 / C91 / Nm57).